Reading from the N-terminus, the 247-residue chain is Fumarate reductase iron-sulfur subunit (247 aa).

A menaquinone is bound at residue Tyr12. The region spanning 14-94 (PEIESAPTFQ…PGPVRVEPMR (81 aa)) is the 2Fe-2S ferredoxin-type domain. Positions 56, 61, and 76 each coordinate [2Fe-2S] cluster. Residues 140-169 (LDAFKQFSMCINCMLCYSACPVYALDPDFL) form the 4Fe-4S ferredoxin-type domain. [4Fe-4S] cluster-binding residues include Cys149, Cys152, and Cys155. [3Fe-4S] cluster is bound by residues Cys159, Cys205, and Cys211. Cys215 lines the [4Fe-4S] cluster pocket. 226–229 (QRYK) serves as a coordination point for a menaquinone.

Belongs to the succinate dehydrogenase/fumarate reductase iron-sulfur protein family. As to quaternary structure, fumarate dehydrogenase forms part of an enzyme complex containing four subunits: a flavoprotein, an iron-sulfur, and two hydrophobic anchor proteins. [2Fe-2S] cluster is required as a cofactor. [3Fe-4S] cluster serves as cofactor. The cofactor is [4Fe-4S] cluster.

It is found in the cell membrane. The catalysed reaction is a quinone + succinate = fumarate + a quinol. The enzyme catalyses a menaquinone + succinate = a menaquinol + fumarate. The chain is Fumarate reductase iron-sulfur subunit (frdB) from Mycobacterium tuberculosis (strain CDC 1551 / Oshkosh).